The primary structure comprises 670 residues: UvrABC system protein B (670 aa).

The 387-residue stretch at asparagine 28–isoleucine 414 folds into the Helicase ATP-binding domain. Residue glycine 41 to threonine 48 coordinates ATP. A Beta-hairpin motif is present at residues tyrosine 94–isoleucine 117. A Helicase C-terminal domain is found at glutamine 432–isoleucine 594. A UVR domain is found at asparagine 631–lysine 666.

The protein belongs to the UvrB family. In terms of assembly, forms a heterotetramer with UvrA during the search for lesions. Interacts with UvrC in an incision complex.

It localises to the cytoplasm. Functionally, the UvrABC repair system catalyzes the recognition and processing of DNA lesions. A damage recognition complex composed of 2 UvrA and 2 UvrB subunits scans DNA for abnormalities. Upon binding of the UvrA(2)B(2) complex to a putative damaged site, the DNA wraps around one UvrB monomer. DNA wrap is dependent on ATP binding by UvrB and probably causes local melting of the DNA helix, facilitating insertion of UvrB beta-hairpin between the DNA strands. Then UvrB probes one DNA strand for the presence of a lesion. If a lesion is found the UvrA subunits dissociate and the UvrB-DNA preincision complex is formed. This complex is subsequently bound by UvrC and the second UvrB is released. If no lesion is found, the DNA wraps around the other UvrB subunit that will check the other stand for damage. In Onion yellows phytoplasma (strain OY-M), this protein is UvrABC system protein B.